A 175-amino-acid polypeptide reads, in one-letter code: Ribosome maturation factor RimM (175 aa).

Residues 98–175 enclose the PRC barrel domain; it reads EGEYYWHQLE…EMRVDWDADF (78 aa).

It belongs to the RimM family. As to quaternary structure, binds ribosomal protein uS19.

Its subcellular location is the cytoplasm. In terms of biological role, an accessory protein needed during the final step in the assembly of 30S ribosomal subunit, possibly for assembly of the head region. Essential for efficient processing of 16S rRNA. May be needed both before and after RbfA during the maturation of 16S rRNA. It has affinity for free ribosomal 30S subunits but not for 70S ribosomes. This chain is Ribosome maturation factor RimM, found in Pseudomonas aeruginosa (strain ATCC 15692 / DSM 22644 / CIP 104116 / JCM 14847 / LMG 12228 / 1C / PRS 101 / PAO1).